The primary structure comprises 644 residues: uncharacterized protein (644 aa).

A helical membrane pass occupies residues 16–38 (LLSYLGVVGVGIAGLCIYRSVWG). Positions 586–603 (VRQLQKEAGEGEAEEHPR) are enriched in basic and acidic residues. Residues 586 to 613 (VRQLQKEAGEGEAEEHPRARPAAGKAQR) form a disordered region.

The protein resides in the membrane. This is an uncharacterized protein from Treponema pallidum (strain Nichols).